The sequence spans 414 residues: Serine-type anaerobic sulfatase-maturating enzyme (414 aa).

One can recognise a Radical SAM core domain in the interval 5–250 (TYAPFAKPLY…LCTIFDEWVK (246 aa)). The [4Fe-4S] cluster site is built by Cys24 and Cys28. Tyr30 contacts S-adenosyl-L-methionine. Cys31 contributes to the [4Fe-4S] cluster binding site. S-adenosyl-L-methionine-binding residues include Gly76, Ser131, and Arg143. 3 residues coordinate [4Fe-4S] cluster: Cys276, Cys282, and Cys297. Asp298 acts as the Proton acceptor in catalysis. [4Fe-4S] cluster contacts are provided by Cys339, Cys342, Cys348, Cys352, and Cys371.

The protein belongs to the radical SAM superfamily. Anaerobic sulfatase-maturating enzyme family. [4Fe-4S] cluster is required as a cofactor.

It catalyses the reaction L-seryl-[sulfatase] + S-adenosyl-L-methionine = 3-oxo-L-alanyl-[sulfatase] + 5'-deoxyadenosine + L-methionine + H(+). Its pathway is protein modification; sulfatase oxidation. In terms of biological role, involved in 'Ser-type' sulfatase maturation under anaerobic conditions. Links the heparin and the chondroitin sulfate utilization pathways which contribute to the colonization of the intestinal tract. May catalyze the activation of chondro-6-sulfatase, i.e. the post-translational modification of a specific serine residue into 3-oxoalanine (also known as C(alpha)-formylglycine (FGly)), by a free radical chemical mechanism initiated via the reductive cleavage of S-adenosyl-L-methionine (SAM). Is also able to oxidize a cysteine residue in a synthetic substrate to FGly in vitro, but not in a recombinant Cys-type sulfatase in vivo. But since B.thetaiotaomicron possesses only Ser-type sulfatases, the oxidation of serine residues to FGly is the sole physiological activity. This chain is Serine-type anaerobic sulfatase-maturating enzyme (chuR), found in Bacteroides thetaiotaomicron (strain ATCC 29148 / DSM 2079 / JCM 5827 / CCUG 10774 / NCTC 10582 / VPI-5482 / E50).